Consider the following 242-residue polypeptide: MAGHSKWANIKHKKQKTDAQKGKIFTKIGREIAIVVKQGGPDPEVNSKLKDVIAKAKAANMPNETIMRSIKKAAGEVDSTNYEEVVYEGYGPGGVAVIVEATTDNRNRTAGEVRHLFDKFGGNLGTTGCVSFMFDKKGVILIEKSDKVNEDDLMMKALDLGAEDFTAEDEYFEIITAPEDFSKVREGLEKEGYEFVEAEVEMVPQTTTTLTDPKHIEFMNKLIDSLEDLDDVQNVYHNWYGE.

The protein belongs to the TACO1 family.

It is found in the cytoplasm. This Acetivibrio thermocellus (strain ATCC 27405 / DSM 1237 / JCM 9322 / NBRC 103400 / NCIMB 10682 / NRRL B-4536 / VPI 7372) (Clostridium thermocellum) protein is Probable transcriptional regulatory protein Cthe_2075.